The primary structure comprises 115 residues: Meiotically up-regulated gene 106 protein (115 aa).

The first 34 residues, 1 to 34 (MSIKVEWIKFTRLKKCATLLVQLSLLRYRYMVLA), serve as a signal peptide directing secretion. A run of 2 helical transmembrane segments spans residues 41–60 (CIVV…GALF) and 81–103 (GVKL…FTPY).

Its subcellular location is the membrane. Functionally, has a role in meiosis. The chain is Meiotically up-regulated gene 106 protein (mug106) from Schizosaccharomyces pombe (strain 972 / ATCC 24843) (Fission yeast).